We begin with the raw amino-acid sequence, 245 residues long: tRNA pseudouridine synthase A (245 aa).

Asp-52 acts as the Nucleophile in catalysis. Tyr-111 serves as a coordination point for substrate.

The protein belongs to the tRNA pseudouridine synthase TruA family. As to quaternary structure, homodimer.

It catalyses the reaction uridine(38/39/40) in tRNA = pseudouridine(38/39/40) in tRNA. Formation of pseudouridine at positions 38, 39 and 40 in the anticodon stem and loop of transfer RNAs. This is tRNA pseudouridine synthase A from Rickettsia africae (strain ESF-5).